A 278-amino-acid polypeptide reads, in one-letter code: Sulfur carrier protein FdhD (278 aa).

The active-site Cysteine persulfide intermediate is the cysteine 120.

The protein belongs to the FdhD family.

It localises to the cytoplasm. In terms of biological role, required for formate dehydrogenase (FDH) activity. Acts as a sulfur carrier protein that transfers sulfur from IscS to the molybdenum cofactor prior to its insertion into FDH. The protein is Sulfur carrier protein FdhD of Bordetella petrii (strain ATCC BAA-461 / DSM 12804 / CCUG 43448).